The following is a 722-amino-acid chain: Threonine--tRNA ligase 1, cytoplasmic (722 aa).

Residues 1 to 10 show a composition bias toward polar residues; it reads MSQEKASSPS. The interval 1 to 48 is disordered; that stretch reads MSQEKASSPSGKMDGEKPVDASEEKRKEGGKKKSKDGGGDGGRAELNP. Over residues 13 to 27 the composition is skewed to basic and acidic residues; sequence MDGEKPVDASEEKRK. In terms of domain architecture, TGS spans 78–142; that stretch reads DSKPIKVTLP…ETDCTLELLK (65 aa). Lys242 is modified (N6-acetyllysine). Thr245 is subject to Phosphothreonine. Tyr297 is subject to Phosphotyrosine. Thr452 is modified (phosphothreonine).

Belongs to the class-II aminoacyl-tRNA synthetase family. Homodimer. ISGylated.

Its subcellular location is the cytoplasm. The catalysed reaction is tRNA(Thr) + L-threonine + ATP = L-threonyl-tRNA(Thr) + AMP + diphosphate + H(+). Catalyzes the attachment of threonine to tRNA(Thr) in a two-step reaction: threonine is first activated by ATP to form Thr-AMP and then transferred to the acceptor end of tRNA(Thr). Also edits incorrectly charged tRNA(Thr) via its editing domain, at the post-transfer stage. The sequence is that of Threonine--tRNA ligase 1, cytoplasmic (Tars1) from Mus musculus (Mouse).